A 157-amino-acid polypeptide reads, in one-letter code: Protein-export protein SecB (157 aa).

The protein belongs to the SecB family. In terms of assembly, homotetramer, a dimer of dimers. One homotetramer interacts with 1 SecA dimer.

Its subcellular location is the cytoplasm. Functionally, one of the proteins required for the normal export of preproteins out of the cell cytoplasm. It is a molecular chaperone that binds to a subset of precursor proteins, maintaining them in a translocation-competent state. It also specifically binds to its receptor SecA. The sequence is that of Protein-export protein SecB from Proteus mirabilis (strain HI4320).